We begin with the raw amino-acid sequence, 526 residues long: Importin subunit alpha-1a (526 aa).

In terms of domain architecture, IBB spans 1–58; that stretch reads MSLRPSERVEVRRNRYKVAVDAEEGRRRREDNMVEIRKSRREESLLKKRREGLQAQAP. 8 ARM repeats span residues 105-145, 148-187, 190-230, 232-271, 274-313, 316-356, 359-398, and 402-441; these read SPPI…NIAS, SENTKVVIDHGAVPIFVKLLGSSSDDVREQAVWALGNVAG, PKCR…NFCR, KPQPSFEQTRPALPALARLIHSNDEEVLTDACWALSYLSD, NDKIQAVIEAGVCPRLVELLLHPSPSVLIPALRTVGNIVT, DAQT…NITA, KDQIQAVINAGIIGPLVNLLQTAEFDIKKEAAWAISNATS, and HDQIKYLVSEGCIKPLCDLLICPDIRIVTVCLEGLENILK.

This sequence belongs to the importin alpha family. Forms a complex with importin subunit beta-1. The whole complex, most stable and composed of importin alpha, importin beta and NLS substrate, is referred to as PTAC or pore targeting complex. Interacts with mungbean yellow mosaic virus capsid protein. Highly expressed in callus, followed by root and etiolated leaf. Low expression in green leaf.

Its subcellular location is the cytoplasm. The protein localises to the perinuclear region. Functionally, functions in nuclear protein import. Binds specifically and directly to substrates containing either a simple or bipartite NLS motif. Promotes docking of import substrates to the nuclear envelope. This chain is Importin subunit alpha-1a, found in Oryza sativa subsp. japonica (Rice).